The primary structure comprises 152 residues: Ribosome maturation factor RimP (152 aa).

The protein belongs to the RimP family.

The protein resides in the cytoplasm. Its function is as follows. Required for maturation of 30S ribosomal subunits. The protein is Ribosome maturation factor RimP of Teredinibacter turnerae (strain ATCC 39867 / T7901).